The primary structure comprises 59 residues: uncharacterized protein (59 aa).

Residues 27–59 (SCFQNRPPEPASFQNLRPEPASLQNLRTEPTSF) form a disordered region. Residues 48 to 59 (SLQNLRTEPTSF) show a composition bias toward polar residues.

This is an uncharacterized protein from Homo sapiens (Human).